We begin with the raw amino-acid sequence, 464 residues long: tRNA modification GTPase MnmE (464 aa).

(6S)-5-formyl-5,6,7,8-tetrahydrofolate is bound by residues Arg-29, Glu-91, and Arg-131. The 162-residue stretch at 226–387 (GLKVALTGKP…LINYLLKKCG (162 aa)) folds into the TrmE-type G domain. Residue Asn-236 coordinates K(+). Residues 236–241 (NVGKSS), 255–261 (TDLPGTT), and 280–283 (DTAG) contribute to the GTP site. A Mg(2+)-binding site is contributed by Ser-240. Residues Thr-255, Leu-257, and Thr-260 each contribute to the K(+) site. Thr-261 is a Mg(2+) binding site. Lys-464 is a (6S)-5-formyl-5,6,7,8-tetrahydrofolate binding site.

This sequence belongs to the TRAFAC class TrmE-Era-EngA-EngB-Septin-like GTPase superfamily. TrmE GTPase family. Homodimer. Heterotetramer of two MnmE and two MnmG subunits. The cofactor is K(+).

It is found in the cytoplasm. In terms of biological role, exhibits a very high intrinsic GTPase hydrolysis rate. Involved in the addition of a carboxymethylaminomethyl (cmnm) group at the wobble position (U34) of certain tRNAs, forming tRNA-cmnm(5)s(2)U34. This is tRNA modification GTPase MnmE from Prochlorococcus marinus (strain NATL2A).